A 315-amino-acid polypeptide reads, in one-letter code: Rhomboid-related protein 4 (315 aa).

The Cytoplasmic portion of the chain corresponds to 1-21; sequence MQRRTRGINTGLLLLLSQVFQ. A helical membrane pass occupies residues 22–42; it reads IGINNIPPVTLATLAVNVWFF. The Lumenal portion of the chain corresponds to 43-103; it reads LNPWKPLYHS…KLERRLGSRW (61 aa). Residues 104 to 124 traverse the membrane as a helical segment; sequence FAYVIATFSLLTGVVYLLLQF. Residues 125–137 lie on the Cytoplasmic side of the membrane; sequence TVAELLNQPDFKR. A helical transmembrane segment spans residues 138-154; that stretch reads NCAVGFSGVLFALKVLS. Serine 144 (nucleophile) is an active-site residue. At 155–180 the chain is on the lumenal side; sequence NHYCPGGFVNILGFPVPNRFACWAEL. Residues 181-201 form a helical membrane-spanning segment; the sequence is VAIHFCTPGTSFAGHLAGILV. Histidine 195 is an active-site residue. At 202–315 the chain is on the cytoplasmic side; sequence GLMYTQGPLK…RQRLHRFDGQ (114 aa). Residues 269 to 284 form a ubiquitin-binding domain (UBD) region; it reads SEEEQLERALRASIWD. The VCP/p97-interacting motif (VIM) stretch occupies residues 301–315; it reads PEEMRRQRLHRFDGQ.

This sequence belongs to the peptidase S54 family. As to quaternary structure, interacts with BIK and STEAP3. Interacts (via C-terminal domain) with VCP/P97. Interacts with ubiquitin and ubiquitinated proteins. Expressed in testis (at protein level). Expressed in intestine, lung, brain, kidney, epididymis, stomach, muscle, spleen, liver, heart and testis.

The protein resides in the endoplasmic reticulum membrane. It is found in the mitochondrion membrane. It catalyses the reaction Cleaves type-1 transmembrane domains using a catalytic dyad composed of serine and histidine that are contributed by different transmembrane domains.. With respect to regulation, inhibited by aprotinin. Its function is as follows. Intramembrane-cleaving serine protease that cleaves single transmembrane or multi-pass membrane proteins in the hydrophobic plane of the membrane, luminal loops and juxtamembrane regions. Involved in regulated intramembrane proteolysis and the subsequent release of functional polypeptides from their membrane anchors. Functional component of endoplasmic reticulum-associated degradation (ERAD) for misfolded membrane proteins. Required for the degradation process of some specific misfolded endoplasmic reticulum (ER) luminal proteins. Participates in the transfer of misfolded proteins from the ER to the cytosol, where they are destroyed by the proteasome in a ubiquitin-dependent manner. Functions in BIK, MPZ, PKD1, PTCRA, RHO, STEAP3 and TRAC processing. Involved in the regulation of exosomal secretion; inhibits the TSAP6-mediated secretion pathway. Involved in the regulation of apoptosis; modulates BIK-mediated apoptotic activity. Also plays a role in the regulation of spermatogenesis; inhibits apoptotic activity in spermatogonia. The polypeptide is Rhomboid-related protein 4 (Rhbdd1) (Mus musculus (Mouse)).